The following is a 282-amino-acid chain: MKLFAQGTSLDLSHPHVMGILNVTPDSFSDGGTHNSLIDAVKHANLMINAGATIIDVGGESTRPGAAEVSVEEELQRVIPVVEAIAQRFEVWISVDTSKPEVIRESAKVGAHIINDIRSLSEPGALEAAAETGLPVCLMHMQGNPKTMQEAPKYDDVFAEVNRYFIEQIARCEQAGIAKEKLLLDPGFGFGKNLSHNYSLLARLAEFHHFNLPLLVGMSRKSMIGQLLNVGPSERLSGSLACAVIAAMQGAHIIRVHDVKETVEAMRVVEATLSAKENKRYE.

Residues 15–267 enclose the Pterin-binding domain; it reads PHVMGILNVT…DVKETVEAMR (253 aa). A Mg(2+)-binding site is contributed by Asn-22. Residues Thr-62, Asp-96, Asn-115, Asp-185, Lys-221, and 255-257 each bind (7,8-dihydropterin-6-yl)methyl diphosphate; that span reads RVH.

Belongs to the DHPS family. In terms of assembly, homodimer. Mg(2+) is required as a cofactor.

It catalyses the reaction (7,8-dihydropterin-6-yl)methyl diphosphate + 4-aminobenzoate = 7,8-dihydropteroate + diphosphate. It participates in cofactor biosynthesis; tetrahydrofolate biosynthesis; 7,8-dihydrofolate from 2-amino-4-hydroxy-6-hydroxymethyl-7,8-dihydropteridine diphosphate and 4-aminobenzoate: step 1/2. In terms of biological role, catalyzes the condensation of para-aminobenzoate (pABA) with 6-hydroxymethyl-7,8-dihydropterin diphosphate (DHPt-PP) to form 7,8-dihydropteroate (H2Pte), the immediate precursor of folate derivatives. This chain is Dihydropteroate synthase (folP), found in Shigella flexneri.